Reading from the N-terminus, the 404-residue chain is Exodeoxyribonuclease 7 large subunit (404 aa).

Belongs to the XseA family. As to quaternary structure, heterooligomer composed of large and small subunits.

It is found in the cytoplasm. The catalysed reaction is Exonucleolytic cleavage in either 5'- to 3'- or 3'- to 5'-direction to yield nucleoside 5'-phosphates.. Its function is as follows. Bidirectionally degrades single-stranded DNA into large acid-insoluble oligonucleotides, which are then degraded further into small acid-soluble oligonucleotides. The polypeptide is Exodeoxyribonuclease 7 large subunit (Caldanaerobacter subterraneus subsp. tengcongensis (strain DSM 15242 / JCM 11007 / NBRC 100824 / MB4) (Thermoanaerobacter tengcongensis)).